The primary structure comprises 221 residues: Endo-1,4-beta-xylanase 11A (221 aa).

An N-terminal signal peptide occupies residues 1-18 (MKFATVLAFATAAGAAFA). Residues 23 to 220 (SSETTEAGQL…GTGSASMSVS (198 aa)) form the GH11 domain. Catalysis depends on Glu111, which acts as the Nucleophile. The N-linked (GlcNAc...) asparagine glycan is linked to Asn117. Glu207 (proton donor) is an active-site residue.

Belongs to the glycosyl hydrolase 11 (cellulase G) family.

Its subcellular location is the secreted. The catalysed reaction is Endohydrolysis of (1-&gt;4)-beta-D-xylosidic linkages in xylans.. The protein operates within glycan degradation; xylan degradation. Endo-1,4-beta-xylanase involved in the hydrolysis of xylan, a major structural heterogeneous polysaccharide found in plant biomass representing the second most abundant polysaccharide in the biosphere, after cellulose. The polypeptide is Endo-1,4-beta-xylanase 11A (XYN11A) (Mycosarcoma maydis (Corn smut fungus)).